Here is a 129-residue protein sequence, read N- to C-terminus: Large ribosomal subunit protein uL22 (129 aa).

It belongs to the universal ribosomal protein uL22 family. Part of the 50S ribosomal subunit.

Functionally, this protein binds specifically to 23S rRNA; its binding is stimulated by other ribosomal proteins, e.g. L4, L17, and L20. It is important during the early stages of 50S assembly. It makes multiple contacts with different domains of the 23S rRNA in the assembled 50S subunit and ribosome. In terms of biological role, the globular domain of the protein is located near the polypeptide exit tunnel on the outside of the subunit, while an extended beta-hairpin is found that lines the wall of the exit tunnel in the center of the 70S ribosome. This is Large ribosomal subunit protein uL22 from Onion yellows phytoplasma (strain OY-M).